Consider the following 391-residue polypeptide: 3-ketoacyl-CoA thiolase (391 aa).

The active-site Acyl-thioester intermediate is Cys95. Catalysis depends on proton acceptor residues His347 and Cys377.

The protein belongs to the thiolase-like superfamily. Thiolase family. As to quaternary structure, heterotetramer of two alpha chains (FadB) and two beta chains (FadA).

It localises to the cytoplasm. It carries out the reaction an acyl-CoA + acetyl-CoA = a 3-oxoacyl-CoA + CoA. It participates in lipid metabolism; fatty acid beta-oxidation. In terms of biological role, catalyzes the final step of fatty acid oxidation in which acetyl-CoA is released and the CoA ester of a fatty acid two carbons shorter is formed. The sequence is that of 3-ketoacyl-CoA thiolase from Ectopseudomonas mendocina (strain ymp) (Pseudomonas mendocina).